The sequence spans 65 residues: Large ribosomal subunit protein bL35 (65 aa).

The tract at residues 1–30 is disordered; sequence MPKMKTNRGAAKRFRKTASGRFKSKQSHLR. Over residues 10–30 the composition is skewed to basic residues; that stretch reads AAKRFRKTASGRFKSKQSHLR.

This sequence belongs to the bacterial ribosomal protein bL35 family.

The polypeptide is Large ribosomal subunit protein bL35 (Pseudoalteromonas atlantica (strain T6c / ATCC BAA-1087)).